The chain runs to 478 residues: Putative indole-3-acetic acid-amido synthetase GH3.10 (478 aa).

This sequence belongs to the IAA-amido conjugating enzyme family.

In terms of biological role, may catalyze the synthesis of indole-3-acetic acid (IAA)-amino acid conjugates, providing a mechanism for the plant to cope with the presence of excess auxin. This chain is Putative indole-3-acetic acid-amido synthetase GH3.10 (GH3.10), found in Oryza sativa subsp. japonica (Rice).